The sequence spans 186 residues: Glutathione peroxidase 7 (186 aa).

The first 18 residues, 1–18, serve as a signal peptide directing secretion; it reads MVAAVATAWLLLWAAACA. Residue Cys56 is part of the active site.

This sequence belongs to the glutathione peroxidase family.

It is found in the secreted. The catalysed reaction is 2 glutathione + H2O2 = glutathione disulfide + 2 H2O. Its function is as follows. It protects esophageal epithelia from hydrogen peroxide-induced oxidative stress. It suppresses acidic bile acid-induced reactive oxygen species (ROS) and protects against oxidative DNA damage and double-strand breaks. This Mus musculus (Mouse) protein is Glutathione peroxidase 7 (Gpx7).